Consider the following 282-residue polypeptide: Armadillo repeat-containing protein 1 (282 aa).

Residue Met-1 is modified to N-acetylmethionine. One copy of the ARM repeat lies at 39–81; sequence GCLPGLILFMDHPNPPVVHSALLALRYLAECRANREKMKGELG. Thr-137 is subject to Phosphothreonine. Phosphoserine is present on residues Ser-189, Ser-246, Ser-260, and Ser-267. A disordered region spans residues 239-261; sequence DYLPEDESPTKEQDKAVSRVGSH. Residues 246–255 are compositionally biased toward basic and acidic residues; that stretch reads SPTKEQDKAV.

In terms of assembly, interacts with mitochondrial contact site and cristae organizing system (MICOS) complex components IMMT/MIC60 and MICOS10/MIC10. Interacts with mitochondrial outer membrane sorting assembly machinery (SAM) complex components SAMM50 and MTX1.

The protein localises to the cytoplasm. It is found in the mitochondrion. Its subcellular location is the mitochondrion outer membrane. In terms of biological role, in association with mitochondrial contact site and cristae organizing system (MICOS) complex components and mitochondrial outer membrane sorting assembly machinery (SAM) complex components may regulate mitochondrial dynamics playing a role in determining mitochondrial length, distribution and motility. The protein is Armadillo repeat-containing protein 1 (Armc1) of Mus musculus (Mouse).